The sequence spans 354 residues: Fructose-bisphosphate aldolase (354 aa).

Position 61 (Ser61) interacts with D-glyceraldehyde 3-phosphate. Catalysis depends on Asp104, which acts as the Proton donor. His105, Asp139, Glu169, and His221 together coordinate Zn(2+). Gly222 serves as a coordination point for dihydroxyacetone phosphate. Zn(2+) is bound at residue His260. Dihydroxyacetone phosphate-binding positions include 261-263 (GGS) and 282-285 (NIDT).

This sequence belongs to the class II fructose-bisphosphate aldolase family. In terms of assembly, homodimer. Zn(2+) is required as a cofactor.

The catalysed reaction is beta-D-fructose 1,6-bisphosphate = D-glyceraldehyde 3-phosphate + dihydroxyacetone phosphate. Its pathway is carbohydrate degradation; glycolysis; D-glyceraldehyde 3-phosphate and glycerone phosphate from D-glucose: step 4/4. Catalyzes the aldol condensation of dihydroxyacetone phosphate (DHAP or glycerone-phosphate) with glyceraldehyde 3-phosphate (G3P) to form fructose 1,6-bisphosphate (FBP) in gluconeogenesis and the reverse reaction in glycolysis. This Campylobacter jejuni subsp. jejuni serotype O:2 (strain ATCC 700819 / NCTC 11168) protein is Fructose-bisphosphate aldolase (fba).